A 522-amino-acid chain; its full sequence is F-box only protein 7 (522 aa).

The interval 1 to 87 (MKLRVRLQKR…EDAIAAPNLP (87 aa)) is ubiquitin-like. Residues 88-132 (SSTVSEHSSVQNNDQPSLATSSSQSNIQDAQLHDSLQGQATQSEV) are compositionally biased toward polar residues. Residues 88–151 (SSTVSEHSSV…GQHFEAEAVP (64 aa)) are disordered. Residues 91–128 (VSEHSSVQNNDQPSLATSSSQSNIQDAQLHDSLQGQAT) are important for interaction with PINK1. The important for interaction with CDK6 stretch occupies residues 128–168 (TQSEVWNDDSVSGPGQHFEAEAVPDVVDVEEGTGYYLAEPM). Residues 179-323 (PHSLEILYQS…PLLAFTRQAL (145 aa)) are important for dimerization and interaction with PSMF1. The F-box domain maps to 328 to 374 (VFGLVVLPLELKLRIFRLLDVRSVLSLSAVCRDLCITSNDQLLWRCL). An important for interaction with CDK6 region spans residues 380–522 (RDGSIRGRDT…WPTDSRLPFM (143 aa)). Residues R431 and R451 each carry the omega-N-methylarginine modification. The short motif at 481-484 (RFDP) is the RFDP motif element. The disordered stretch occupies residues 484–522 (PVGPLPGPNPILPGRGGPSDRFPLRPSRGWPTDSRLPFM). Residue R518 is modified to Asymmetric dimethylarginine.

As to quaternary structure, part of the SCF (SKP1-CUL1-F-box) E3 ubiquitin-protein ligase complex SCF(FBXO7) formed of CUL1, SKP1, RBX1 and FBXO7. Interacts via its C-terminal proline-rich region with DLGAP5. Interacts with BIRC2. Interacts with CDK6 and promotes its interaction with D-type cyclin. Interacts (via the N-terminal Ubl domain) with PRKN. Interacts (via N-terminal region) with PINK1. Interacts with PSMF1.

Its subcellular location is the cytoplasm. It is found in the nucleus. The protein localises to the mitochondrion. The protein resides in the cytosol. Its pathway is protein modification; protein ubiquitination. In terms of biological role, substrate recognition component of a SCF (SKP1-CUL1-F-box protein) E3 ubiquitin-protein ligase complex which mediates the ubiquitination and subsequent proteasomal degradation of target proteins and plays a role in several biological processes such as cell cycle, cell proliferation, or maintenance of chromosome stability. Recognizes and ubiquitinates BIRC2 and the cell cycle regulator DLGAP5. Plays a role downstream of PINK1 in the clearance of damaged mitochondria via selective autophagy (mitophagy) by targeting PRKN to dysfunctional depolarized mitochondria. Promotes MFN1 ubiquitination. Mediates the ubiquitination and proteasomal degradation of UXT isoform 2, thereby impairing the NF-kappa-B signaling pathway. Inhibits NF-kappa-B pathway also by promoting the ubiquitinatioin of TRAF2. Affects the assembly state and activity of the proteasome in the cells including neurons by ubiquitinating the proteasomal subunit PSMA2 via 'Lys-63'-linked polyubiquitin chains. Promotes 'Lys-48'-linked polyubiquitination SIRT7, leading to the hydrogen peroxide-induced cell death. The protein is F-box only protein 7 (FBXO7) of Bos taurus (Bovine).